The primary structure comprises 1383 residues: Spike glycoprotein (1383 aa).

The signal sequence occupies residues 1 to 25; sequence MRSLIYFWLLLPVLPTLSLPQDVTR. The interval 26-734 is S1; the sequence is CQSTTNFRRF…TRELPGFFYH (709 aa). Over 26–1324 the chain is Virion surface; it reads CQSTTNFRRF…NRVETYIKWP (1299 aa). The interaction with host ANPEP stretch occupies residues 617 to 745; it reads FQFTKGELIT…NDGSNCTEPV (129 aa). The interval 735-1383 is S2; it reads SNDGSNCTEP…YEAFEKVHVQ (649 aa). The interval 955 to 975 is fusion peptide; that stretch reads IGGMALGGITAAAALPFSYAV. The interval 969–1088 is heptad repeat 1 (HR1); that stretch reads LPFSYAVQAR…QVDRLITGRL (120 aa). Coiled-coil stretches lie at residues 1036-1080 and 1272-1314; these read QEVV…DVQV and TYLN…LEWL. A heptad repeat 2 (HR2) region spans residues 1240 to 1336; that stretch reads PDYIDVNKTL…VWLIIVIVLI (97 aa). Residues 1325-1344 traverse the membrane as a helical segment; it reads WWVWLIIVIVLIFVVSLLVF. The Intravirion portion of the chain corresponds to 1345 to 1383; the sequence is CCISTGCCGCCGCCGACFSGCCRGPRLQPYEAFEKVHVQ. The short motif at 1379–1383 is the KxHxx element; the sequence is KVHVQ.

It belongs to the alphacoronaviruses spike protein family. Homotrimer. During virus morphogenesis, found in a complex with M and HE proteins. Interacts with host ANPEP.

Its subcellular location is the virion membrane. The protein localises to the host endoplasmic reticulum-Golgi intermediate compartment membrane. Its function is as follows. S1 region attaches the virion to the cell membrane by interacting with host ANPEP/aminopeptidase N, initiating the infection. Binding to the receptor probably induces conformational changes in the S glycoprotein unmasking the fusion peptide of S2 region and activating membranes fusion. S2 region belongs to the class I viral fusion protein. Under the current model, the protein has at least 3 conformational states: pre-fusion native state, pre-hairpin intermediate state, and post-fusion hairpin state. During viral and target cell membrane fusion, the coiled coil regions (heptad repeats) regions assume a trimer-of-hairpins structure, positioning the fusion peptide in close proximity to the C-terminal region of the ectodomain. The formation of this structure appears to drive apposition and subsequent fusion of viral and target cell membranes. This chain is Spike glycoprotein, found in Porcine epidemic diarrhea virus (strain CV777) (PEDV).